Consider the following 616-residue polypeptide: Centrosomal protein of 70 kDa (616 aa).

2 coiled-coil regions span residues 96–210 (EETT…EEER) and 273–335 (NYKG…NIKL). A TPR repeat occupies 502–535 (NGVFPRMNEVYTRLGEMNNAVRNLQELLELDSSS).

Directly interacts with tubulin-gamma; this interaction determines centrosomal localization.

The protein resides in the cytoplasm. It localises to the cytoskeleton. The protein localises to the microtubule organizing center. It is found in the centrosome. Its function is as follows. Plays a role in the organization of both preexisting and nascent microtubules in interphase cells. During mitosis, required for the organization and orientation of the mitotic spindle. In Mus musculus (Mouse), this protein is Centrosomal protein of 70 kDa (Cep70).